Reading from the N-terminus, the 219-residue chain is Holliday junction branch migration complex subunit RuvA (219 aa).

The domain I stretch occupies residues 1–67 (MIGWLRGERI…DDGSSLFGFP (67 aa)). The segment at 68-146 (DRRERDLFRV…AWSAEKNSDH (79 aa)) is domain II. A flexible linker region spans residues 147–161 (SDLSLVDRSDLKSLP). The tract at residues 162–219 (IEPDPLQDLQLTLSTLGYEDLEIRRAMRAVATGEEVPAANDGDGWLRASLRWLNRPSA) is domain III.

The protein belongs to the RuvA family. As to quaternary structure, homotetramer. Forms an RuvA(8)-RuvB(12)-Holliday junction (HJ) complex. HJ DNA is sandwiched between 2 RuvA tetramers; dsDNA enters through RuvA and exits via RuvB. An RuvB hexamer assembles on each DNA strand where it exits the tetramer. Each RuvB hexamer is contacted by two RuvA subunits (via domain III) on 2 adjacent RuvB subunits; this complex drives branch migration. In the full resolvosome a probable DNA-RuvA(4)-RuvB(12)-RuvC(2) complex forms which resolves the HJ.

Its subcellular location is the cytoplasm. Functionally, the RuvA-RuvB-RuvC complex processes Holliday junction (HJ) DNA during genetic recombination and DNA repair, while the RuvA-RuvB complex plays an important role in the rescue of blocked DNA replication forks via replication fork reversal (RFR). RuvA specifically binds to HJ cruciform DNA, conferring on it an open structure. The RuvB hexamer acts as an ATP-dependent pump, pulling dsDNA into and through the RuvAB complex. HJ branch migration allows RuvC to scan DNA until it finds its consensus sequence, where it cleaves and resolves the cruciform DNA. This is Holliday junction branch migration complex subunit RuvA from Synechococcus sp. (strain CC9311).